The following is a 641-amino-acid chain: 1-deoxy-D-xylulose-5-phosphate synthase (641 aa).

Residues histidine 78 and 119-121 (AHS) each bind thiamine diphosphate. Mg(2+) is bound at residue aspartate 150. Residues 151–152 (GA), asparagine 179, tyrosine 288, and glutamate 370 each bind thiamine diphosphate. Asparagine 179 lines the Mg(2+) pocket.

It belongs to the transketolase family. DXPS subfamily. As to quaternary structure, homodimer. Mg(2+) serves as cofactor. Requires thiamine diphosphate as cofactor.

It catalyses the reaction D-glyceraldehyde 3-phosphate + pyruvate + H(+) = 1-deoxy-D-xylulose 5-phosphate + CO2. The protein operates within metabolic intermediate biosynthesis; 1-deoxy-D-xylulose 5-phosphate biosynthesis; 1-deoxy-D-xylulose 5-phosphate from D-glyceraldehyde 3-phosphate and pyruvate: step 1/1. Its function is as follows. Catalyzes the acyloin condensation reaction between C atoms 2 and 3 of pyruvate and glyceraldehyde 3-phosphate to yield 1-deoxy-D-xylulose-5-phosphate (DXP). The sequence is that of 1-deoxy-D-xylulose-5-phosphate synthase from Azorhizobium caulinodans (strain ATCC 43989 / DSM 5975 / JCM 20966 / LMG 6465 / NBRC 14845 / NCIMB 13405 / ORS 571).